The sequence spans 495 residues: DNA double-strand break repair helicase HerA (495 aa).

ATP-binding positions include Arg142, 151 to 156 (GSGKSN), and 459 to 460 (KI).

It belongs to the HerA family. Interacts with Rad50 and Mre11.

The enzyme catalyses Couples ATP hydrolysis with the unwinding of duplex DNA at the replication fork by translocating in the 5'-3' direction. This creates two antiparallel DNA single strands (ssDNA). The leading ssDNA polymer is the template for DNA polymerase III holoenzyme which synthesizes a continuous strand.. It carries out the reaction ATP + H2O = ADP + phosphate + H(+). The catalysed reaction is Couples ATP hydrolysis with the unwinding of duplex DNA by translocating in the 3'-5' direction.. ATPase activity is slightly stimulated by either circular single- or double-stranded (ds)DNA with a weak preference for dsDNA. Functionally, involved in DNA double-strand break (DSB) repair. Probably acts with NurA to stimulate resection of the 5' strand and produce the long 3' single-strand that is required for RadA loading. Has DNA-dependent ATPase activity and bidirectional DNA helicase activity. Loads on either a 3' or a 5' DNA tail for subsequent DNA unwinding; has no activity on blunt-end DNA. In Sulfolobus acidocaldarius (strain ATCC 33909 / DSM 639 / JCM 8929 / NBRC 15157 / NCIMB 11770), this protein is DNA double-strand break repair helicase HerA.